Here is a 202-residue protein sequence, read N- to C-terminus: ATP-dependent Clp protease proteolytic subunit (202 aa).

The active-site Nucleophile is Ser106. The active site involves His131.

It belongs to the peptidase S14 family. Fourteen ClpP subunits assemble into 2 heptameric rings which stack back to back to give a disk-like structure with a central cavity, resembling the structure of eukaryotic proteasomes.

Its subcellular location is the cytoplasm. The enzyme catalyses Hydrolysis of proteins to small peptides in the presence of ATP and magnesium. alpha-casein is the usual test substrate. In the absence of ATP, only oligopeptides shorter than five residues are hydrolyzed (such as succinyl-Leu-Tyr-|-NHMec, and Leu-Tyr-Leu-|-Tyr-Trp, in which cleavage of the -Tyr-|-Leu- and -Tyr-|-Trp bonds also occurs).. Its function is as follows. Cleaves peptides in various proteins in a process that requires ATP hydrolysis. Has a chymotrypsin-like activity. Plays a major role in the degradation of misfolded proteins. This is ATP-dependent Clp protease proteolytic subunit from Acidovorax sp. (strain JS42).